Consider the following 453-residue polypeptide: tRNA modification GTPase MnmE (453 aa).

(6S)-5-formyl-5,6,7,8-tetrahydrofolate contacts are provided by Arg-22, Glu-79, and Lys-119. Residues 215–376 (GMKVVIAGRP…LRQHLKECMG (162 aa)) enclose the TrmE-type G domain. Residue Asn-225 coordinates K(+). GTP is bound by residues 225 to 230 (NAGKSS), 244 to 250 (TDIAGTT), 269 to 272 (DTAG), and 334 to 337 (NKAD). Position 229 (Ser-229) interacts with Mg(2+). Residues Thr-244, Ile-246, and Thr-249 each coordinate K(+). Thr-250 contacts Mg(2+). Residue Lys-453 participates in (6S)-5-formyl-5,6,7,8-tetrahydrofolate binding.

This sequence belongs to the TRAFAC class TrmE-Era-EngA-EngB-Septin-like GTPase superfamily. TrmE GTPase family. As to quaternary structure, homodimer. Heterotetramer of two MnmE and two MnmG subunits. K(+) serves as cofactor.

It is found in the cytoplasm. Exhibits a very high intrinsic GTPase hydrolysis rate. Involved in the addition of a carboxymethylaminomethyl (cmnm) group at the wobble position (U34) of certain tRNAs, forming tRNA-cmnm(5)s(2)U34. This chain is tRNA modification GTPase MnmE, found in Vibrio cholerae serotype O1 (strain ATCC 39315 / El Tor Inaba N16961).